We begin with the raw amino-acid sequence, 584 residues long: Phosphoinositide phospholipase C 7 (584 aa).

Residues 26-102 (EIKTLFDNYS…NSPLSSLEVH (77 aa)) form the EF-hand-like domain. Positions 103–248 (QDMDAPLSHY…LKKRIMISTK (146 aa)) constitute a PI-PLC X-box domain. Active-site residues include H118 and H164. Positions 285–318 (DRSVDKNDSNGDDDDDDDDDDDDDDGDDKIKKNA) are disordered. S287 bears the Phosphoserine mark. Residues 294 to 311 (NGDDDDDDDDDDDDDDGD) are compositionally biased toward acidic residues. Positions 323–439 (KHLIAIEAGK…GYIKKPDLLL (117 aa)) constitute a PI-PLC Y-box domain. The region spanning 433–566 (KKPDLLLKSN…QGIRAVPLRN (134 aa)) is the C2 domain.

Requires Ca(2+) as cofactor. As to expression, expressed in leaves, roots, flowers and siliques.

It is found in the cell membrane. It catalyses the reaction a 1,2-diacyl-sn-glycero-3-phospho-(1D-myo-inositol-4,5-bisphosphate) + H2O = 1D-myo-inositol 1,4,5-trisphosphate + a 1,2-diacyl-sn-glycerol + H(+). Functionally, the production of the second messenger molecules diacylglycerol (DAG) and inositol 1,4,5-trisphosphate (IP3) is mediated by activated phosphatidylinositol-specific phospholipase C enzymes. This Arabidopsis thaliana (Mouse-ear cress) protein is Phosphoinositide phospholipase C 7 (PLC7).